Reading from the N-terminus, the 123-residue chain is Protein Wnt-3a (123 aa).

Ser1 carries the O-palmitoleoyl serine lipid modification. Cysteines 89 and 104 form a disulfide. Asn90 is a glycosylation site (N-linked (GlcNAc...) asparagine).

The protein belongs to the Wnt family. Post-translationally, disulfide bonds have critical and distinct roles in secretion and activity. Loss of each conserved cysteine results in high molecular weight oxidized Wnt oligomers, which are formed through inter-Wnt disulfide bonding. Palmitoleoylation is required for efficient binding to frizzled receptors. Depalmitoleoylation leads to Wnt signaling pathway inhibition.

Its subcellular location is the secreted. The protein resides in the extracellular space. It is found in the extracellular matrix. In terms of biological role, ligand for members of the frizzled family of seven transmembrane receptors. Functions in the canonical Wnt signaling pathway that results in activation of transcription factors of the TCF/LEF family. Required for normal embryonic mesoderm development and formation of caudal somites. Required for normal morphogenesis of the developing neural tube. This chain is Protein Wnt-3a (WNT-3A), found in Alopias vulpinus (Common thresher shark).